The sequence spans 537 residues: Protein disulfide isomerase-like 1-5 (537 aa).

An N-terminal signal peptide occupies residues 1 to 29 (MSLIPKPISKVSTFTFILLILLSFTIIIA). Positions 58 to 184 (LQEDRPEQQS…IVIWVQKKTG (127 aa)) constitute a Thioredoxin 1 domain. The Nucleophile role is filled by C106. N-linked (GlcNAc...) asparagine glycosylation is found at N160, N364, and N416. One can recognise a Thioredoxin 2 domain in the interval 380-526 (LLESDPSPNS…IAVFINEELL (147 aa)). Active-site nucleophile residues include C447 and C450. C447 and C450 are oxidised to a cystine. N-linked (GlcNAc...) asparagine glycosylation is present at N530. The short motif at 534 to 537 (KDEL) is the Prevents secretion from ER element.

It belongs to the protein disulfide isomerase family. Widely expressed.

It localises to the endoplasmic reticulum lumen. It catalyses the reaction Catalyzes the rearrangement of -S-S- bonds in proteins.. In terms of biological role, acts as a protein-folding catalyst that interacts with nascent polypeptides to catalyze the formation, isomerization, and reduction or oxidation of disulfide bonds. The polypeptide is Protein disulfide isomerase-like 1-5 (PDIL1-5) (Arabidopsis thaliana (Mouse-ear cress)).